Here is an 829-residue protein sequence, read N- to C-terminus: Leucine--tRNA ligase (829 aa).

A 'HIGH' region motif is present at residues 40-51 (PYPSGAGLHVGH). Positions 609 to 613 (KMSKS) match the 'KMSKS' region motif. An ATP-binding site is contributed by K612.

This sequence belongs to the class-I aminoacyl-tRNA synthetase family.

The protein resides in the cytoplasm. It carries out the reaction tRNA(Leu) + L-leucine + ATP = L-leucyl-tRNA(Leu) + AMP + diphosphate. This Lactococcus lactis subsp. lactis (strain IL1403) (Streptococcus lactis) protein is Leucine--tRNA ligase.